A 119-amino-acid chain; its full sequence is Endocuticle structural glycoprotein SgAbd-3 (119 aa).

Glutamine 1 carries the post-translational modification Pyrrolidone carboxylic acid. Residues 24 to 98 (DGSYRYSFET…PQGAHLPTPP (75 aa)) form the Chitin-binding type R&amp;R domain. The interval 33 to 55 (TSDGQRASQEGALKQVSAPGPDG) is disordered. O-linked (HexNAc...) threonine glycosylation is present at threonine 96.

Its function is as follows. Component of the abdominal endocuticle. In Schistocerca gregaria (Desert locust), this protein is Endocuticle structural glycoprotein SgAbd-3.